The primary structure comprises 216 residues: Adenylate kinase (216 aa).

10-15 (GAGKGT) contributes to the ATP binding site. Positions 30-59 (STGDMFRAAMKNETALGLEAKSYIDKGELV) are NMP. AMP contacts are provided by residues T31, R36, 57 to 59 (ELV), 85 to 88 (GFPR), and Q92. The LID stretch occupies residues 126–164 (GRFICRTCGATYHKLFNPPKVEGTCDRCGGHEFYQREDD). R127 serves as a coordination point for ATP. C130 and C133 together coordinate Zn(2+). 136–137 (TY) contributes to the ATP binding site. 2 residues coordinate Zn(2+): C150 and C153. Residues R161 and R172 each coordinate AMP. R200 lines the ATP pocket.

It belongs to the adenylate kinase family. In terms of assembly, monomer.

It localises to the cytoplasm. It catalyses the reaction AMP + ATP = 2 ADP. It participates in purine metabolism; AMP biosynthesis via salvage pathway; AMP from ADP: step 1/1. Its function is as follows. Catalyzes the reversible transfer of the terminal phosphate group between ATP and AMP. Plays an important role in cellular energy homeostasis and in adenine nucleotide metabolism. The polypeptide is Adenylate kinase (Enterococcus faecalis (strain ATCC 700802 / V583)).